The chain runs to 386 residues: O-methyltransferase 12 (386 aa).

5 residues coordinate S-adenosyl-L-homocysteine: serine 207, glycine 231, aspartate 254, aspartate 274, and lysine 288. Residue aspartate 254 coordinates S-adenosyl-L-methionine. Catalysis depends on histidine 292, which acts as the Proton acceptor.

Belongs to the class I-like SAM-binding methyltransferase superfamily. Cation-independent O-methyltransferase family. As to quaternary structure, homodimer. In terms of tissue distribution, expressed at high levels in all tissues.

The catalysed reaction is 4-hydroxy-3,5-dimethoxyphenethylamine + S-adenosyl-L-methionine = mescaline + S-adenosyl-L-homocysteine + H(+). It catalyses the reaction dopamine + S-adenosyl-L-methionine = 4-methoxytyramine + S-adenosyl-L-homocysteine + H(+). It participates in aromatic compound metabolism. The protein operates within alkaloid biosynthesis. In terms of biological role, O-methyltransferase participating in the biosynthesis of natural products derived from phenylethylamine, including mescaline, a natural hallucinogen potentially used in psychotherapeutic treatments. Catalyzes the O-methylation of dopamine, 4-hydroxy-3,5-dimethoxyphenethylamine, 4,5-dihydroxy-3-methoxyphenethylamine and N-methyl-4,5-dihydroxy-3-methoxyphenethylamine. Also involved in the conversion of N-methyl-4-hydroxy-3,5-dimethoxyphenethylamine to N-methylmescaline. In Lophophora williamsii (Peyote), this protein is O-methyltransferase 12.